The following is a 514-amino-acid chain: Zinc finger and BTB domain-containing protein 2 (514 aa).

Positions 24–89 constitute a BTB domain; it reads CDCTVAIGDV…MYTGKMAPQL (66 aa). Residues lysine 147 and lysine 154 each participate in a glycyl lysine isopeptide (Lys-Gly) (interchain with G-Cter in SUMO2) cross-link. The tract at residues 149-231 is disordered; sequence ASAPEKLGRD…LEASSSDEQP (83 aa). Polar residues-rich tracts occupy residues 161-200 and 222-231; these read PQTS…PLQT and LEASSSDEQP. The C2H2-type 1 zinc-finger motif lies at 254 to 276; that stretch reads YACHLCGRRFTLRSSLREHLQIH. Phosphoserine is present on serine 341. Lysine 362 is covalently cross-linked (Glycyl lysine isopeptide (Lys-Gly) (interchain with G-Cter in SUMO2)). The segment at 363–385 adopts a C2H2-type 2 zinc-finger fold; that stretch reads YECTICGRKFIQKSHWREHMYIH. The segment at 390–410 adopts a C2H2-type 3; atypical zinc-finger fold; it reads FKCSTCDKSFCRANQAARHVC. The C2H2-type 4; atypical zinc-finger motif lies at 448 to 468; that stretch reads YKCNLCDKTFSTPNEVVKHSC. Residues lysine 465, lysine 505, and lysine 506 each participate in a glycyl lysine isopeptide (Lys-Gly) (interchain with G-Cter in SUMO2) cross-link.

The protein resides in the nucleus. Functionally, may be involved in transcriptional regulation. This is Zinc finger and BTB domain-containing protein 2 (ZBTB2) from Homo sapiens (Human).